A 425-amino-acid polypeptide reads, in one-letter code: 3-deoxy-D-manno-octulosonic acid transferase (425 aa).

The chain crosses the membrane as a helical; Signal-anchor span at residues 3–23; sequence ELLYTALLYLIQPLIWIRLWV. Catalysis depends on Glu-60, which acts as the Proton acceptor. CMP is bound by residues 268–269, 309–311, and 335–338; these read PR, MGE, and NPLE.

It belongs to the glycosyltransferase group 1 family. Glycosyltransferase 30 subfamily.

It is found in the cell inner membrane. It catalyses the reaction lipid IVA (E. coli) + CMP-3-deoxy-beta-D-manno-octulosonate = alpha-Kdo-(2-&gt;6)-lipid IVA (E. coli) + CMP + H(+). The enzyme catalyses alpha-Kdo-(2-&gt;6)-lipid IVA (E. coli) + CMP-3-deoxy-beta-D-manno-octulosonate = alpha-Kdo-(2-&gt;4)-alpha-Kdo-(2-&gt;6)-lipid IVA (E. coli) + CMP + H(+). It functions in the pathway glycolipid biosynthesis; KDO(2)-lipid A biosynthesis; KDO(2)-lipid A from CMP-3-deoxy-D-manno-octulosonate and lipid IV(A): step 1/4. The protein operates within glycolipid biosynthesis; KDO(2)-lipid A biosynthesis; KDO(2)-lipid A from CMP-3-deoxy-D-manno-octulosonate and lipid IV(A): step 2/4. Its pathway is bacterial outer membrane biogenesis; LPS core biosynthesis. In terms of biological role, involved in lipopolysaccharide (LPS) biosynthesis. Catalyzes the transfer of two 3-deoxy-D-manno-octulosonate (Kdo) residues from CMP-Kdo to lipid IV(A), the tetraacyldisaccharide-1,4'-bisphosphate precursor of lipid A. The sequence is that of 3-deoxy-D-manno-octulosonic acid transferase (waaA) from Escherichia coli O157:H7.